The primary structure comprises 601 residues: Polypeptide N-acetylgalactosaminyltransferase 11 (601 aa).

The Cytoplasmic segment spans residues 1–7 (MGSAALR). The chain crosses the membrane as a helical; Signal-anchor for type II membrane protein span at residues 8–28 (CFCYGCLFTSVTWTLLLFIYF). N-linked (GlcNAc...) asparagine glycosylation is found at Asn29 and Asn202. At 29–601 (NFSEESQGFR…SPSQQWHLEN (573 aa)) the chain is on the lumenal side. The segment at 143–254 (LPMASIVICF…EMWLQPLLAP (112 aa)) is catalytic subdomain A. Residues 312-374 (PFRSPTMAGG…PCSRVGHIFR (63 aa)) are catalytic subdomain B. A Ricin B-type lectin domain is found at 469–600 (RPKILQRGRL…GSPSQQWHLE (132 aa)). Cys486 and Cys505 form a disulfide bridge. Residue Asn508 is glycosylated (N-linked (GlcNAc...) asparagine). Intrachain disulfides connect Cys529-Cys546 and Cys571-Cys589.

The protein belongs to the glycosyltransferase 2 family. GalNAc-T subfamily. Interacts with notch1. Mn(2+) serves as cofactor. Requires Ca(2+) as cofactor.

Its subcellular location is the golgi apparatus membrane. It carries out the reaction L-seryl-[protein] + UDP-N-acetyl-alpha-D-galactosamine = a 3-O-[N-acetyl-alpha-D-galactosaminyl]-L-seryl-[protein] + UDP + H(+). The enzyme catalyses L-threonyl-[protein] + UDP-N-acetyl-alpha-D-galactosamine = a 3-O-[N-acetyl-alpha-D-galactosaminyl]-L-threonyl-[protein] + UDP + H(+). Its pathway is protein modification; protein glycosylation. Functionally, polypeptide N-acetylgalactosaminyltransferase that catalyzes the initiation of protein O-linked glycosylation and is involved in left/right asymmetry by mediating O-glycosylation of NOTCH1. O-glycosylation of NOTCH1 promotes activation of NOTCH1, modulating the balance between motile and immotile (sensory) cilia at the left-right organiser (LRO). Polypeptide N-acetylgalactosaminyltransferases catalyze the transfer of an N-acetyl-D-galactosamine residue to a serine or threonine residue on the protein receptor. The chain is Polypeptide N-acetylgalactosaminyltransferase 11 (galnt11) from Xenopus tropicalis (Western clawed frog).